Here is a 102-residue protein sequence, read N- to C-terminus: Complement inhibitor RaCI6 (102 aa).

Residues 1-24 form the signal peptide; the sequence is MAALNGLVLLLLTISAMFISECYS. 2 disulfides stabilise this stretch: Cys-37-Cys-61 and Cys-42-Cys-63.

It belongs to the RaCI family. In terms of tissue distribution, expressed in salivary glands.

The protein localises to the secreted. Its function is as follows. Complement inhibitor. Prevents complement-mediated C5 activation by binding to C5. Binds C5 at a different binding site than the other tick complement inhibitors OmCI and CirpT1, and the drug eculizumab. This Dermacentor andersoni (Rocky mountain wood tick) protein is Complement inhibitor RaCI6.